The primary structure comprises 596 residues: Ubiquilin-4 (596 aa).

One can recognise a Ubiquitin-like domain in the interval isoleucine 13–lysine 87. Residues lysine 23 and lysine 62 each participate in a glycyl lysine isopeptide (Lys-Gly) (interchain with G-Cter in SUMO2) cross-link. The interval glutamine 89 to serine 148 is disordered. Composition is skewed to low complexity over residues threonine 93–proline 119 and serine 139–serine 148. At serine 139 the chain carries Phosphoserine. 2 consecutive STI1 domains span residues asparagine 187 to methionine 224 and glutamate 225 to methionine 256. At threonine 282 the chain carries Phosphothreonine. A disordered region spans residues glycine 297–phenylalanine 361. Residues serine 302–serine 313 show a composition bias toward low complexity. At serine 313 the chain carries Phosphoserine. Pro residues predominate over residues leucine 324–serine 335. The span at glycine 339–glycine 349 shows a compositional bias: gly residues. The span at glutamine 352–phenylalanine 361 shows a compositional bias: polar residues. 2 consecutive STI1 domains span residues asparagine 388–leucine 435 and leucine 439–leucine 471. The interval valine 482 to glutamine 528 is disordered. Residues glycine 499–proline 513 are compositionally biased toward polar residues. The UBA domain maps to proline 548–serine 593.

As to quaternary structure, homooligomer. Binds signal sequences of proteins that are targeted to the endoplasmic reticulum. Interacts (via UBA domain) with GJA1 (not ubiquitinated) and with ubiquitin; both compete for the same binding site. Interacts (via UBA domain) with ubiquitin and with polyubiquitin chains. Interacts (via ubiquitin-like domain) with PSMD2 and PSMD4, regulatory subunits of the 26S proteasome. Interacts with ATXN1/SCA1; interaction with ATXN1 inhibits polyubiquitination of UBQLN4 and interferes with PSMD4 binding. Interacts with HERPUD1. Interacts (via ubiquitin-like domain) with UBQLN1 (via UBA domain). Interacts with UBQLN2. Interacts (via STI1 1 and 2 domains) with MAP1LC3A/B/C. Interacts with BAG6. Interacts with MRE11 (when ubiquitinated); interaction with ubiquitinated MRE11 leads to MRE11 removal from chromatin. Interacts with DESI1/POST; leading to nuclear export. Interacts with BCL2A1 and BCL2L10. Post-translationally, phosphorylated by ATM at Ser-313 in response to DNA damage, leading to localization in the nucleus and recruitment to sites of DNA damage. In terms of processing, ubiquitinated; this does not lead to proteasomal degradation. May undergo both 'Lys-48'- and 'Lys-63'-linked polyubiquitination. In terms of tissue distribution, detected in testis, ovary, thyroid, kidney, thymus, heart, liver, lung and spleen (at protein level). Highly expressed in heart, skeletal muscle, kidney, liver and brain. Detected at lower levels in testis, lung and spleen.

The protein localises to the nucleus. The protein resides in the cytoplasm. It localises to the chromosome. It is found in the endoplasmic reticulum. Its subcellular location is the perinuclear region. The protein localises to the cytoplasmic vesicle. The protein resides in the autophagosome. Functionally, regulator of protein degradation that mediates the proteasomal targeting of misfolded, mislocalized or accumulated proteins. Acts by binding polyubiquitin chains of target proteins via its UBA domain and by interacting with subunits of the proteasome via its ubiquitin-like domain. Key regulator of DNA repair that represses homologous recombination repair: in response to DNA damage, recruited to sites of DNA damage following phosphorylation by ATM and acts by binding and removing ubiquitinated MRE11 from damaged chromatin, leading to MRE11 degradation by the proteasome. MRE11 degradation prevents homologous recombination repair, redirecting double-strand break repair toward non-homologous end joining (NHEJ). Specifically recognizes and binds mislocalized transmembrane-containing proteins and targets them to proteasomal degradation. Collaborates with DESI1/POST in the export of ubiquitinated proteins from the nucleus to the cytoplasm. Plays a role in the regulation of the proteasomal degradation of non-ubiquitinated GJA1. Acts as an adapter protein that recruits UBQLN1 to the autophagy machinery. Mediates the association of UBQLN1 with autophagosomes and the autophagy-related protein LC3 (MAP1LC3A/B/C) and may assist in the maturation of autophagosomes to autolysosomes by mediating autophagosome-lysosome fusion. The sequence is that of Ubiquilin-4 from Mus musculus (Mouse).